A 458-amino-acid chain; its full sequence is Exodeoxyribonuclease 7 large subunit (458 aa).

It belongs to the XseA family. Heterooligomer composed of large and small subunits.

The protein localises to the cytoplasm. The enzyme catalyses Exonucleolytic cleavage in either 5'- to 3'- or 3'- to 5'-direction to yield nucleoside 5'-phosphates.. Its function is as follows. Bidirectionally degrades single-stranded DNA into large acid-insoluble oligonucleotides, which are then degraded further into small acid-soluble oligonucleotides. This is Exodeoxyribonuclease 7 large subunit from Yersinia enterocolitica serotype O:8 / biotype 1B (strain NCTC 13174 / 8081).